The sequence spans 189 residues: Inner membrane-spanning protein YciB (189 aa).

5 helical membrane passes run 23 to 43 (ILLA…FVWW), 54 to 74 (ITLA…DAAF), 82 to 102 (VNWL…KTLI), 120 to 140 (LNLA…YVFK), and 150 to 170 (FKLF…GVYL).

The protein belongs to the YciB family.

It is found in the cell inner membrane. Functionally, plays a role in cell envelope biogenesis, maintenance of cell envelope integrity and membrane homeostasis. The polypeptide is Inner membrane-spanning protein YciB (Chromohalobacter salexigens (strain ATCC BAA-138 / DSM 3043 / CIP 106854 / NCIMB 13768 / 1H11)).